Here is a 262-residue protein sequence, read N- to C-terminus: tRNA pseudouridine synthase A 2 (262 aa).

Aspartate 66 (nucleophile) is an active-site residue. Tyrosine 125 contacts substrate.

Belongs to the tRNA pseudouridine synthase TruA family. In terms of assembly, homodimer.

The catalysed reaction is uridine(38/39/40) in tRNA = pseudouridine(38/39/40) in tRNA. Its function is as follows. Formation of pseudouridine at positions 38, 39 and 40 in the anticodon stem and loop of transfer RNAs. In Protochlamydia amoebophila (strain UWE25), this protein is tRNA pseudouridine synthase A 2.